Reading from the N-terminus, the 24-residue chain is Metallothionein (24 aa).

Cys-3, Cys-5, Cys-8, Cys-10, Cys-17, Cys-19, and Cys-22 together coordinate Cd(2+).

This sequence belongs to the metallothionein superfamily. Type 8 family. Contains 4 disulfide bonds.

Functionally, metallothioneins have a high content of cysteine residues that bind various heavy metals. In Neonectria lugdunensis (Aquatic fungus), this protein is Metallothionein.